We begin with the raw amino-acid sequence, 40 residues long: Photosystem II reaction center protein Psb30 (40 aa).

The helical transmembrane segment at 12-32 threads the bilayer; sequence VIFQLTSVALIIIAGPAVIFV.

This sequence belongs to the Psb30/Ycf12 family. As to quaternary structure, PSII is composed of 1 copy each of membrane proteins PsbA, PsbB, PsbC, PsbD, PsbE, PsbF, PsbH, PsbI, PsbJ, PsbK, PsbL, PsbM, PsbT, PsbX, PsbY, PsbZ, Psb30/Ycf12, peripheral proteins PsbO, CyanoQ (PsbQ), PsbU, PsbV and a large number of cofactors. It forms dimeric complexes.

The protein localises to the cellular thylakoid membrane. A core subunit of photosystem II (PSII), probably helps stabilize the reaction center. The sequence is that of Photosystem II reaction center protein Psb30 from Nostoc sp. (strain PCC 7120 / SAG 25.82 / UTEX 2576).